Reading from the N-terminus, the 196-residue chain is MQLKRVAEAKLPTPWGDFLMVGFEELATGHDHVALVYGDISGHTPVLARVHSECLTGDALFSLRCDCGFQLEAALTQIAEEGRGILLYHRQEGRNIGLLNKIRAYALQDQGYDTVEANHQLGFAADERDFTLCADMFKLLGVNEVRLLTNNPKKVEILTEAGINIVERVPLIVGRNPNNEHYLDTKAEKMGHLLNK.

49-53 (RVHSE) lines the GTP pocket. Zn(2+) is bound by residues Cys-54, Cys-65, and Cys-67. Residues Gln-70, 92 to 94 (EGR), and Thr-114 contribute to the GTP site. The active-site Proton acceptor is the Asp-126. The Nucleophile role is filled by Arg-128. Thr-149 and Lys-154 together coordinate GTP.

The protein belongs to the GTP cyclohydrolase II family. Homodimer. Zn(2+) is required as a cofactor.

The catalysed reaction is GTP + 4 H2O = 2,5-diamino-6-hydroxy-4-(5-phosphoribosylamino)-pyrimidine + formate + 2 phosphate + 3 H(+). It participates in cofactor biosynthesis; riboflavin biosynthesis; 5-amino-6-(D-ribitylamino)uracil from GTP: step 1/4. Its function is as follows. Catalyzes the conversion of GTP to 2,5-diamino-6-ribosylamino-4(3H)-pyrimidinone 5'-phosphate (DARP), formate and pyrophosphate. In Escherichia coli O127:H6 (strain E2348/69 / EPEC), this protein is GTP cyclohydrolase-2.